The following is a 245-amino-acid chain: Ribonuclease PH (245 aa).

Residues arginine 86 and glycine 124–arginine 126 contribute to the phosphate site.

This sequence belongs to the RNase PH family. Homohexameric ring arranged as a trimer of dimers. It has been suggested that the active form is the dimer which binds tRNA and that the hexameric form protects the substrate recognition loop (approximately residues 65-82) from proteolysis.

The enzyme catalyses tRNA(n+1) + phosphate = tRNA(n) + a ribonucleoside 5'-diphosphate. Its function is as follows. Phosphorolytic 3'-5' exoribonuclease that plays an important role in tRNA 3'-end maturation. Removes nucleotide residues following the 3'-CCA terminus of tRNAs; can also add nucleotides to the ends of RNA molecules by using nucleoside diphosphates as substrates, but this may not be physiologically important. Probably plays a role in initiation of 16S rRNA degradation (leading to ribosome degradation) during starvation. Plays a role in the secondary pathway of 23S rRNA 3' end maturation. This is Ribonuclease PH from Bacillus subtilis (strain 168).